A 418-amino-acid chain; its full sequence is UDP-N-acetylglucosamine 1-carboxyvinyltransferase (418 aa).

Residue 22–23 (KN) participates in phosphoenolpyruvate binding. Arginine 92 provides a ligand contact to UDP-N-acetyl-alpha-D-glucosamine. Cysteine 116 (proton donor) is an active-site residue. Position 116 is a 2-(S-cysteinyl)pyruvic acid O-phosphothioketal (cysteine 116). Positions 306 and 328 each coordinate UDP-N-acetyl-alpha-D-glucosamine.

The protein belongs to the EPSP synthase family. MurA subfamily.

The protein localises to the cytoplasm. It carries out the reaction phosphoenolpyruvate + UDP-N-acetyl-alpha-D-glucosamine = UDP-N-acetyl-3-O-(1-carboxyvinyl)-alpha-D-glucosamine + phosphate. It functions in the pathway cell wall biogenesis; peptidoglycan biosynthesis. Cell wall formation. Adds enolpyruvyl to UDP-N-acetylglucosamine. In Shewanella amazonensis (strain ATCC BAA-1098 / SB2B), this protein is UDP-N-acetylglucosamine 1-carboxyvinyltransferase.